A 469-amino-acid polypeptide reads, in one-letter code: GDP-fucose protein O-fucosyltransferase 3 (469 aa).

At 1–9 the chain is on the cytoplasmic side; the sequence is MVNRIWEKR. Residues 10–30 traverse the membrane as a helical; Signal-anchor for type II membrane protein segment; it reads FWISCFFIIFLFILVIFQVMV. The Lumenal portion of the chain corresponds to 31–469; that stretch reads ELGRFEKKET…EFWNLVFKFW (439 aa). N-linked (GlcNAc...) asparagine glycosylation is found at asparagine 100, asparagine 158, asparagine 308, and asparagine 333. Cysteine 379 and cysteine 382 are joined by a disulfide. The N-linked (GlcNAc...) asparagine glycan is linked to asparagine 455.

It belongs to the glycosyltransferase 10 family.

Its subcellular location is the endoplasmic reticulum membrane. It catalyses the reaction L-threonyl-[protein] + GDP-beta-L-fucose = 3-O-(alpha-L-fucosyl)-L-threonyl-[protein] + GDP + H(+). The enzyme catalyses L-seryl-[protein] + GDP-beta-L-fucose = 3-O-(alpha-L-fucosyl)-L-seryl-[protein] + GDP + H(+). It participates in protein modification; protein glycosylation. Protein O-fucosyltransferase that specifically catalyzes O-fucosylation of serine or threonine residues in EMI domains of target proteins. Attaches fucose through an O-glycosidic linkage. O-fucosylation of EMI domain-containing proteins may be required for facilitating protein folding and secretion. In Xenopus laevis (African clawed frog), this protein is GDP-fucose protein O-fucosyltransferase 3 (fut10).